Here is a 326-residue protein sequence, read N- to C-terminus: L-carnitine dehydrogenase (326 aa).

Gly-19–Gly-24 contributes to the NAD(+) binding site.

It belongs to the 3-hydroxyacyl-CoA dehydrogenase family. L-carnitine dehydrogenase subfamily. In terms of assembly, homodimer.

The protein localises to the cytoplasm. It carries out the reaction carnitine + NAD(+) = 3-dehydrocarnitine + NADH + H(+). Its pathway is amine and polyamine metabolism; carnitine metabolism. Catalyzes the NAD(+)-dependent oxidation of L-carnitine to 3-dehydrocarnitine. The protein is L-carnitine dehydrogenase of Bacillus cereus (strain ZK / E33L).